The primary structure comprises 192 residues: Ion-translocating oxidoreductase complex subunit A (192 aa).

Helical transmembrane passes span 5–25 (LLLL…FLGL), 39–59 (IGMS…SYLV), 65–85 (LPFD…AVVV), 102–122 (ALGI…VALL), 134–154 (AIFG…FSAM), and 171–191 (AIAM…TGLV).

This sequence belongs to the NqrDE/RnfAE family. In terms of assembly, the complex is composed of six subunits: RnfA, RnfB, RnfC, RnfD, RnfE and RnfG.

It localises to the cell inner membrane. Its function is as follows. Part of a membrane-bound complex that couples electron transfer with translocation of ions across the membrane. In Shewanella pealeana (strain ATCC 700345 / ANG-SQ1), this protein is Ion-translocating oxidoreductase complex subunit A.